A 117-amino-acid polypeptide reads, in one-letter code: uncharacterized protein (117 aa).

The tract at residues 96 to 117 (RKGGASKHRTLSAETGIRGEGE) is disordered.

This is an uncharacterized protein from Saccharomyces cerevisiae (strain ATCC 204508 / S288c) (Baker's yeast).